Here is a 464-residue protein sequence, read N- to C-terminus: NADH dehydrogenase [ubiquinone] flavoprotein 1, mitochondrial (464 aa).

A mitochondrion-targeting transit peptide spans 1-20; it reads MLATRRLLGWSLPARVSVRF. The residue at position 81 (Lys-81) is an N6-acetyllysine; alternate. Position 81 is an N6-succinyllysine; alternate (Lys-81). NADH is bound at residue 87-96; sequence GRGGAGFPTG. Lys-104 carries the N6-acetyllysine modification. 199–247 is a binding site for FMN; sequence RGAGAYICGEETALIESIEGKQGKPRLKPPFPADVGVFGCPTTVANVET. Omega-N-methylarginine is present on Arg-257. Lys-375 is modified (N6-acetyllysine). [4Fe-4S] cluster-binding residues include Cys-379, Cys-382, Cys-385, and Cys-425.

This sequence belongs to the complex I 51 kDa subunit family. Core subunit of respiratory chain NADH dehydrogenase (Complex I) which is composed of 45 different subunits. This is a component of the flavoprotein-sulfur (FP) fragment of the enzyme. Interacts with RAB5IF. FMN is required as a cofactor. [4Fe-4S] cluster serves as cofactor.

It is found in the mitochondrion inner membrane. The catalysed reaction is a ubiquinone + NADH + 5 H(+)(in) = a ubiquinol + NAD(+) + 4 H(+)(out). Core subunit of the mitochondrial membrane respiratory chain NADH dehydrogenase (Complex I) which catalyzes electron transfer from NADH through the respiratory chain, using ubiquinone as an electron acceptor. Part of the peripheral arm of the enzyme, where the electrons from NADH are accepted by flavin mononucleotide (FMN) and then passed along a chain of iron-sulfur clusters by electron tunnelling to the final acceptor ubiquinone. Contains FMN, which is the initial electron acceptor as well as one iron-sulfur cluster. This chain is NADH dehydrogenase [ubiquinone] flavoprotein 1, mitochondrial, found in Pan troglodytes (Chimpanzee).